A 721-amino-acid chain; its full sequence is MQKKSDDPYERLLLLHLQHYGFLSDNSSGIPIKREWEGIQDSTASDMINSSSPSESSDSNLEEEQEESKPCSNFFSLNKALRTRQLVFDFDGERPIPRLRDPLDLFTIPSTSCPFQGVRWPIECDVICDKIQHIEWDPSEPETFYQPTGNEQTPMPVGEVRGNTVYCIDPATKASSFTYSRVGGSRGPIKSATSCANNQKEPTLAFESRFECGNLQKAVQVGQYDYGLTLRTDLYTTKHTQWFYFRVRNMREGVTYRFTIINLMKSSSLYGAGMCPLLYSEKTAWLKGEGWKRTGSSIRYYRNNIEQDGKALYSLTWTLEFPYDGDTCYLAHCYPYTYSKLQHYLREVISDPVRAAYCKLRVLCRSLAGNAVYVLTITAPSSSLAERKAKRAVVVTARVHPGETNGSWMMQGFLEFLLSDLPDAHLLRETFIFKVIPMLNPDGVVVGNYRCSLAGRDLNRNYRSMLRDSFPCIWYTRNMVKRLLAEREVVVYCDFHGHSRKNNVFMYGCNERKDASQCLQERVFPLMMSKNAKDKFSFRSCKFKMHKSKEGTGRIVMWRLGIRNSYTMESTFGGSTLGDRKGTHFSTLDLKSMGYCFCDTLLDFCDPDPAKMTRCLEELGVLLKQEIRRKLGREVDSLENLSDIDIESSTSGSNSTESDGLPVHLLNVTNQGKKKLLRSRKERNRLRQGRVQSAGKTDASKPYSCQTLNATTQHGDTEDQS.

The segment at threonine 43–cysteine 71 is disordered. Over residues serine 50–serine 59 the composition is skewed to low complexity. The Peptidase M14 domain maps to tyrosine 334–cysteine 605. Residues histidine 400, glutamate 403, and histidine 496 each coordinate Zn(2+). Residue glutamate 569 is the Proton donor/acceptor of the active site. The segment at aspartate 645–serine 721 is disordered. Over residues glutamate 647–glycine 660 the composition is skewed to low complexity. Residues glycine 672–glutamine 688 show a composition bias toward basic residues. A compositionally biased stretch (polar residues) spans tyrosine 703–histidine 714.

This sequence belongs to the peptidase M14 family. Zn(2+) is required as a cofactor.

The protein localises to the cytoplasm. The protein resides in the cytosol. Its subcellular location is the cytoskeleton. It is found in the microtubule organizing center. It localises to the centrosome. The protein localises to the centriole. The protein resides in the cilium basal body. The enzyme catalyses (L-glutamyl)(n+1)-gamma-L-glutamyl-L-glutamyl-[protein] + H2O = (L-glutamyl)(n)-gamma-L-glutamyl-L-glutamyl-[protein] + L-glutamate. Its function is as follows. Metallocarboxypeptidase that mediates deglutamylation of target proteins. Catalyzes the deglutamylation of polyglutamate side chains generated by post-translational polyglutamylation in proteins such as tubulins. Also removes gene-encoded polyglutamates from the carboxy-terminus of target proteins such as MYLK. Does not show detyrosinase or deglycylase activities from the carboxy-terminus of tubulin. Metallocarboxypeptidase that mediates deglutamylation of tubulin and non-tubulin target proteins. Catalyzes the removal of polyglutamate side chains present on the gamma-carboxyl group of glutamate residues within the C-terminal tail of tubulin protein. Specifically cleaves tubulin long-side-chains, while it is not able to remove the branching point glutamate. Also catalyzes the removal of polyglutamate residues from the carboxy-terminus of non-tubulin proteins. The chain is Cytosolic carboxypeptidase 2 (zte25) from Danio rerio (Zebrafish).